The following is a 375-amino-acid chain: Queuine tRNA-ribosyltransferase (375 aa).

Asp-89 acts as the Proton acceptor in catalysis. Substrate is bound by residues 89-93 (DSGGF), Asp-143, Gln-187, and Gly-214. The interval 245 to 251 (GVGKPED) is RNA binding. Asp-264 serves as the catalytic Nucleophile. Residues 269-273 (TRNAR) form an RNA binding; important for wobble base 34 recognition region. Residues Cys-302, Cys-304, Cys-307, and His-333 each contribute to the Zn(2+) site.

This sequence belongs to the queuine tRNA-ribosyltransferase family. In terms of assembly, homodimer. Within each dimer, one monomer is responsible for RNA recognition and catalysis, while the other monomer binds to the replacement base PreQ1. The cofactor is Zn(2+).

The enzyme catalyses 7-aminomethyl-7-carbaguanine + guanosine(34) in tRNA = 7-aminomethyl-7-carbaguanosine(34) in tRNA + guanine. The protein operates within tRNA modification; tRNA-queuosine biosynthesis. Its function is as follows. Catalyzes the base-exchange of a guanine (G) residue with the queuine precursor 7-aminomethyl-7-deazaguanine (PreQ1) at position 34 (anticodon wobble position) in tRNAs with GU(N) anticodons (tRNA-Asp, -Asn, -His and -Tyr). Catalysis occurs through a double-displacement mechanism. The nucleophile active site attacks the C1' of nucleotide 34 to detach the guanine base from the RNA, forming a covalent enzyme-RNA intermediate. The proton acceptor active site deprotonates the incoming PreQ1, allowing a nucleophilic attack on the C1' of the ribose to form the product. After dissociation, two additional enzymatic reactions on the tRNA convert PreQ1 to queuine (Q), resulting in the hypermodified nucleoside queuosine (7-(((4,5-cis-dihydroxy-2-cyclopenten-1-yl)amino)methyl)-7-deazaguanosine). In Photobacterium profundum (strain SS9), this protein is Queuine tRNA-ribosyltransferase.